A 224-amino-acid polypeptide reads, in one-letter code: ATP synthase subunit a (224 aa).

A run of 6 helical transmembrane segments spans residues 17-37 (LSLNWLSTFLGLLMIPSIYWL), 72-92 (IFISLFSLILFNNFMGLFPYI), 99-119 (LTLTLSLALPLWLCFMLYGWI), 125-145 (MFAHLVPQGTPAVLMPFMVCI), 170-190 (LLLTLLGNTGPSMSYLLVTFL), and 195-215 (IALLVLESAVAMIQSYVFAVL).

The protein belongs to the ATPase A chain family. F-type ATPases have 2 components, CF(1) - the catalytic core - and CF(0) - the membrane proton channel. CF(1) has five subunits: alpha(3), beta(3), gamma(1), delta(1), epsilon(1). CF(0) has three main subunits: a, b and c.

It localises to the mitochondrion inner membrane. In terms of biological role, mitochondrial membrane ATP synthase (F(1)F(0) ATP synthase or Complex V) produces ATP from ADP in the presence of a proton gradient across the membrane which is generated by electron transport complexes of the respiratory chain. F-type ATPases consist of two structural domains, F(1) - containing the extramembraneous catalytic core and F(0) - containing the membrane proton channel, linked together by a central stalk and a peripheral stalk. During catalysis, ATP synthesis in the catalytic domain of F(1) is coupled via a rotary mechanism of the central stalk subunits to proton translocation. Key component of the proton channel; it may play a direct role in the translocation of protons across the membrane. The sequence is that of ATP synthase subunit a (mt:ATPase6) from Drosophila mauritiana (Fruit fly).